The primary structure comprises 624 residues: Chaperone protein HtpG (624 aa).

The tract at residues 1–336 (MKGQETRGFQ…SNDLPLNVSR (336 aa)) is a; substrate-binding. The segment at 337–552 (EILQDSTVTR…ADEMSTQMAK (216 aa)) is b. The c stretch occupies residues 553-624 (LFAAAGQSVP…IRRMNQLLVS (72 aa)).

The protein belongs to the heat shock protein 90 family. In terms of assembly, homodimer.

It localises to the cytoplasm. Its function is as follows. Molecular chaperone. Has ATPase activity. This Salmonella paratyphi B (strain ATCC BAA-1250 / SPB7) protein is Chaperone protein HtpG.